The chain runs to 212 residues: Entry-fusion complex associated protein OPG083 (212 aa).

Topologically, residues 1–175 are virion surface; the sequence is MAETKEFKTL…IIENRLPYYD (175 aa). Intrachain disulfides connect Cys-33–Cys-55, Cys-47–Cys-127, and Cys-107–Cys-149. The chain crosses the membrane as a helical span at residues 176 to 196; sequence PWFLVGVAIILVIFTVAICSI. At 197–212 the chain is on the intravirion side; sequence RRNLALKYRYGTFLYV.

Belongs to the orthopoxvirus OPG053 family. As to quaternary structure, component of the entry fusion complex (EFC) composed of OPG053/F9, OPG076/O3, OPG086/G3, OPG094/G9, OPG095/L1, OPG099/L5, OPG107/H2, OPG143/A16, OPG104/J5, OPG147/A21 and OPG155/A28. Except for OPG095/L1 and OPG052/F9, each of the EFC proteins is required for assembly or stability of the complex. Disulfid bonds are oxidized in the cytoplasm by OPG088 protein. Post-translationally, unglycosylated because produced in viral factories instead of the classic ER -Golgi route.

It is found in the virion membrane. Its function is as follows. Component of the entry fusion complex (EFC), which consists of 11 proteins. During cell infection, this complex mediates entry of the virion core into the host cytoplasm by a two-step mechanism consisting of lipid mixing of the viral and cellular membranes and subsequent pore formation. In Vaccinia virus (strain Western Reserve) (VACV), this protein is Entry-fusion complex associated protein OPG083 (OPG053).